We begin with the raw amino-acid sequence, 51 residues long: Ribosome biogenesis protein Nop10 (51 aa).

This sequence belongs to the NOP10 family.

Functionally, involved in ribosome biogenesis; more specifically in 18S rRNA pseudouridylation and in cleavage of pre-rRNA. The sequence is that of Ribosome biogenesis protein Nop10 from Methanococcus maripaludis (strain C6 / ATCC BAA-1332).